Consider the following 595-residue polypeptide: E3 ubiquitin-protein ligase synoviolin B (595 aa).

A helical transmembrane segment spans residues 1 to 19; that stretch reads MTGASLALTASVVAHAYYL. At 20 to 35 the chain is on the lumenal side; the sequence is KNQFYPTVVYLTKSSP. Residues 36–56 form a helical membrane-spanning segment; the sequence is SMAILYIQAFVLVFLLGKFMG. At 57-92 the chain is on the cytoplasmic side; that stretch reads KVFFGQLRAAEMEHLLERSWYAVTETCLAFTVFRDD. A helical membrane pass occupies residues 93–113; sequence FSPRFVALFTLLLFLKCFHWL. The Lumenal portion of the chain corresponds to 114 to 129; sequence AEDRVDFMERSPNISW. A helical transmembrane segment spans residues 130 to 150; it reads LFHFRILALMLLLGVLDAFFV. The Cytoplasmic portion of the chain corresponds to 151 to 163; that stretch reads SHAYNSLVTRGAS. A helical membrane pass occupies residues 164–184; sequence VQLVFGFEYAILMTMILAVFI. The Lumenal segment spans residues 185–218; it reads KYILHSVDLQSENPWDNKAVYMLYTELFTGFIKV. Residues 219–239 traverse the membrane as a helical segment; the sequence is LLYMAFMTIMVKVHTFPLFAI. Residues 230–264 are interaction with p53/TP53; it reads KVHTFPLFAIRPMYLAMRQFKKAVTDAVMSRRAIR. Over 240 to 595 the chain is Cytoplasmic; sequence RPMYLAMRQF…LQKLETTDSQ (356 aa). Residues Cys285, Cys288, Cys301, His303, His306, Cys309, Cys320, and Cys323 each coordinate Zn(2+). The RING-type; atypical zinc finger occupies 285 to 324; sequence CIICREEMVSGAKRLPCNHIFHTSCLRSWFQRQQTCPTCR. Residues 335-353 are compositionally biased toward low complexity; sequence QPQTPAEQQNQHQAQQQPT. Disordered stretches follow at residues 335-370 and 386-426; these read QPQT…LPPF and PVPG…PGAA. Residues 354 to 370 show a composition bias toward pro residues; that stretch reads PVVPPQPNFPPGMLPPF. The segment covering 390–408 has biased composition (low complexity); that stretch reads APVGNPPDEANPGSSSGSS. The stretch at 463-494 forms a coiled coil; that stretch reads EELRAMEGHERQNLEARLQCLQNIHTLLDAAM. Residues 509–595 form a disordered region; the sequence is PPQPPVSSSS…LQKLETTDSQ (87 aa). Low complexity predominate over residues 514 to 552; the sequence is VSSSSSSSASASTEPTTSSVSEPVIDTSSIVTTDSSQQS.

It belongs to the HRD1 family. Homodimer.

The protein localises to the endoplasmic reticulum membrane. It catalyses the reaction S-ubiquitinyl-[E2 ubiquitin-conjugating enzyme]-L-cysteine + [acceptor protein]-L-lysine = [E2 ubiquitin-conjugating enzyme]-L-cysteine + N(6)-ubiquitinyl-[acceptor protein]-L-lysine.. Its pathway is protein modification; protein ubiquitination. E3 ubiquitin-protein ligase which accepts ubiquitin specifically from endoplasmic reticulum-associated UBC7 E2 ligase and transfers it to substrates, promoting their degradation. Component of the endoplasmic reticulum quality control (ERQC) system also called ER-associated degradation (ERAD) involved in ubiquitin-dependent degradation of misfolded endoplasmic reticulum proteins. Also promotes the degradation of normal but naturally short-lived proteins. Protects cells from ER stress-induced apoptosis. Sequesters p53 in the cytoplasm and promotes its degradation, thereby negatively regulating its biological function in transcription, cell cycle regulation and apoptosis. This is E3 ubiquitin-protein ligase synoviolin B (syvn1-b) from Xenopus laevis (African clawed frog).